Reading from the N-terminus, the 294-residue chain is Chelated iron transport system membrane protein YfeC (294 aa).

Transmembrane regions (helical) follow at residues 17–37, 51–71, 93–113, 140–160, 169–189, 194–214, 221–241, and 246–266; these read AIWV…YLML, VVPG…GAFF, AIIG…VSLN, IIIL…LAVF, IGLS…ACTV, TVGA…AYLL, LLII…YLSF, and ATGG…FFFA.

The protein belongs to the ABC-3 integral membrane protein family.

It localises to the cell inner membrane. In terms of biological role, part of an ATP-driven transport system YfeABC for chelated iron. This is Chelated iron transport system membrane protein YfeC (yfeC) from Yersinia pestis.